Consider the following 324-residue polypeptide: MEFILSLIGSLLLIICVLVSVAFLTLLERKVLGYIQIRKGPNKVGLMGIPQPFCDAIKLFTKEQTYPLLSNYLSYYISPIFSLFLSLFVWMCMPFFVKLYSFNLGGLFFLCCTSLGVYTVMVAGWSSNSNYALLGGLRAVAQTISYEVSLALIMLSFIFLIGSYNMIYFFYYQIYMWFLIILFPMSLVWLTISLAETNRTPFDFAEGESELVSGFNVEYSSGGFALIFMAEYASILFMSMLFCVIFLGCDVFNLLFYVKLTFISFVFIWARGTLPRFRYDKLMYLAWKCFLSFSLNYLLFFIGFKILLFSFLLWIFFSKKLMEN.

8 helical membrane-spanning segments follow: residues 3–23 (FILS…SVAF), 77–97 (ISPI…PFFV), 104–124 (LGGL…MVAG), 150–170 (LALI…IYFF), 174–194 (IYMW…TISL), 226–246 (LIFM…CVIF), 250–270 (DVFN…FIWA), and 297–317 (YLLF…WIFF).

The protein belongs to the complex I subunit 1 family.

Its subcellular location is the mitochondrion inner membrane. It catalyses the reaction a ubiquinone + NADH + 5 H(+)(in) = a ubiquinol + NAD(+) + 4 H(+)(out). In terms of biological role, core subunit of the mitochondrial membrane respiratory chain NADH dehydrogenase (Complex I) that is believed to belong to the minimal assembly required for catalysis. Complex I functions in the transfer of electrons from NADH to the respiratory chain. The immediate electron acceptor for the enzyme is believed to be ubiquinone. The sequence is that of NADH-ubiquinone oxidoreductase chain 1 (mt:ND1) from Drosophila yakuba (Fruit fly).